The primary structure comprises 147 residues: Large ribosomal subunit protein bL9 (147 aa).

Belongs to the bacterial ribosomal protein bL9 family.

Functionally, binds to the 23S rRNA. The sequence is that of Large ribosomal subunit protein bL9 from Marinomonas sp. (strain MWYL1).